The chain runs to 357 residues: UDP-N-acetylglucosamine--N-acetylmuramyl-(pentapeptide) pyrophosphoryl-undecaprenol N-acetylglucosamine transferase (357 aa).

UDP-N-acetyl-alpha-D-glucosamine is bound by residues 13–15 (SAG), arginine 166, serine 197, and glutamine 292.

It belongs to the glycosyltransferase 28 family. MurG subfamily.

Its subcellular location is the cell membrane. The catalysed reaction is di-trans,octa-cis-undecaprenyl diphospho-N-acetyl-alpha-D-muramoyl-L-alanyl-D-glutamyl-meso-2,6-diaminopimeloyl-D-alanyl-D-alanine + UDP-N-acetyl-alpha-D-glucosamine = di-trans,octa-cis-undecaprenyl diphospho-[N-acetyl-alpha-D-glucosaminyl-(1-&gt;4)]-N-acetyl-alpha-D-muramoyl-L-alanyl-D-glutamyl-meso-2,6-diaminopimeloyl-D-alanyl-D-alanine + UDP + H(+). It functions in the pathway cell wall biogenesis; peptidoglycan biosynthesis. Its function is as follows. Cell wall formation. Catalyzes the transfer of a GlcNAc subunit on undecaprenyl-pyrophosphoryl-MurNAc-pentapeptide (lipid intermediate I) to form undecaprenyl-pyrophosphoryl-MurNAc-(pentapeptide)GlcNAc (lipid intermediate II). This Clostridium novyi (strain NT) protein is UDP-N-acetylglucosamine--N-acetylmuramyl-(pentapeptide) pyrophosphoryl-undecaprenol N-acetylglucosamine transferase.